We begin with the raw amino-acid sequence, 264 residues long: Hemin import ATP-binding protein HmuV (264 aa).

The region spanning 2-242 is the ABC transporter domain; it reads IEAVNICVQR…QNLSDAYHCS (241 aa). 34–41 lines the ATP pocket; the sequence is GPNGSGKS.

It belongs to the ABC transporter superfamily. Heme (hemin) importer (TC 3.A.1.14.5) family. In terms of assembly, the complex is composed of two ATP-binding proteins (HmuV), two transmembrane proteins (HmuU) and a solute-binding protein (HmuT).

The protein localises to the cell inner membrane. Functionally, part of the ABC transporter complex HmuTUV involved in hemin import. Responsible for energy coupling to the transport system. In Bartonella quintana (strain Toulouse) (Rochalimaea quintana), this protein is Hemin import ATP-binding protein HmuV.